The chain runs to 106 residues: MFEIIQAVFSAGVALALLTFAGITLGGSVVACIISTPLFVIFSPVLVPATIATTLLASGFTASGSFGATAFTILSWLYKKRTGRDLPKIPGLTPPAPASNPAGSGV.

3 helical membrane-spanning segments follow: residues Ala-14–Ile-34, Pro-37–Ala-57, and Ser-58–Tyr-78. The tract at residues Arg-84–Val-106 is disordered.

It belongs to the oleosin family. In terms of processing, proteolytically cleaved following anther tapetal breakdown. Present in pollen (at protein level). Inflorescence-specific expression, especially in flowers florets.

The protein localises to the secreted. The protein resides in the extracellular space. It localises to the extracellular matrix. Its subcellular location is the pollen coat. It is found in the lipid droplet. The protein localises to the membrane. Its function is as follows. Lipid-binding oleosin involved in anther tapetum development, especially for the physiology of tapetosomes. Also implicated in the formation of pollen coat. The chain is Tapetal oleosin GRP-19 from Arabidopsis thaliana (Mouse-ear cress).